The primary structure comprises 267 residues: Probable proteasome subunit beta type-2 (267 aa).

A propeptide spans 1-35 (MMGINERKGFDFEYYQRNLLLQEKGFPTPKATSTG) (removed in mature form). The active-site Nucleophile is the threonine 36.

It belongs to the peptidase T1B family. As to quaternary structure, the 26S proteasome consists of a 20S proteasome core and two 19S regulatory subunits. The 20S proteasome core is composed of 28 subunits that are arranged in four stacked rings, resulting in a barrel-shaped structure. The two end rings are each formed by seven alpha subunits, and the two central rings are each formed by seven beta subunits. The catalytic chamber with the active sites is on the inside of the barrel.

The protein localises to the cytoplasm. Its subcellular location is the nucleus. The enzyme catalyses Cleavage of peptide bonds with very broad specificity.. In terms of biological role, the proteasome is a multicatalytic proteinase complex which is characterized by its ability to cleave peptides with Arg, Phe, Tyr, Leu, and Glu adjacent to the leaving group at neutral or slightly basic pH. The proteasome has an ATP-dependent proteolytic activity (Potential). The chain is Probable proteasome subunit beta type-2 (pup1) from Schizosaccharomyces pombe (strain 972 / ATCC 24843) (Fission yeast).